Reading from the N-terminus, the 431-residue chain is Serine--tRNA ligase (431 aa).

A disordered region spans residues 41-66 (QSRTQELQAERNARSKSIGEAARRGE). 240 to 242 (TSE) serves as a coordination point for L-serine. Position 271-273 (271-273 (RSE)) interacts with ATP. Glu-294 contacts L-serine. Position 358–361 (358–361 (EISS)) interacts with ATP. Ser-392 contributes to the L-serine binding site.

Belongs to the class-II aminoacyl-tRNA synthetase family. Type-1 seryl-tRNA synthetase subfamily. In terms of assembly, homodimer. The tRNA molecule binds across the dimer.

It localises to the cytoplasm. The catalysed reaction is tRNA(Ser) + L-serine + ATP = L-seryl-tRNA(Ser) + AMP + diphosphate + H(+). It carries out the reaction tRNA(Sec) + L-serine + ATP = L-seryl-tRNA(Sec) + AMP + diphosphate + H(+). It participates in aminoacyl-tRNA biosynthesis; selenocysteinyl-tRNA(Sec) biosynthesis; L-seryl-tRNA(Sec) from L-serine and tRNA(Sec): step 1/1. Its function is as follows. Catalyzes the attachment of serine to tRNA(Ser). Is also able to aminoacylate tRNA(Sec) with serine, to form the misacylated tRNA L-seryl-tRNA(Sec), which will be further converted into selenocysteinyl-tRNA(Sec). This is Serine--tRNA ligase from Aeromonas hydrophila subsp. hydrophila (strain ATCC 7966 / DSM 30187 / BCRC 13018 / CCUG 14551 / JCM 1027 / KCTC 2358 / NCIMB 9240 / NCTC 8049).